We begin with the raw amino-acid sequence, 369 residues long: 3-dehydroquinate synthase (369 aa).

NAD(+) is bound by residues 75–80 (DGEEHK), 109–113 (GVIGD), 133–134 (TT), Lys146, Lys155, and 173–176 (TLKT). 3 residues coordinate Zn(2+): Glu188, His251, and His268.

Belongs to the sugar phosphate cyclases superfamily. Dehydroquinate synthase family. The cofactor is Co(2+). Zn(2+) serves as cofactor. It depends on NAD(+) as a cofactor.

Its subcellular location is the cytoplasm. It catalyses the reaction 7-phospho-2-dehydro-3-deoxy-D-arabino-heptonate = 3-dehydroquinate + phosphate. Its pathway is metabolic intermediate biosynthesis; chorismate biosynthesis; chorismate from D-erythrose 4-phosphate and phosphoenolpyruvate: step 2/7. In terms of biological role, catalyzes the conversion of 3-deoxy-D-arabino-heptulosonate 7-phosphate (DAHP) to dehydroquinate (DHQ). The chain is 3-dehydroquinate synthase from Legionella pneumophila (strain Corby).